A 375-amino-acid polypeptide reads, in one-letter code: Growth/differentiation factor 8 (375 aa).

An N-terminal signal peptide occupies residues 1–18 (MQKLQISVYIYLFMLIVA). A propeptide spanning residues 19 to 266 (GPVDLNENSE…VTDTPKRSRR (248 aa)) is cleaved from the precursor. N-linked (GlcNAc...) asparagine glycans are attached at residues Asn47 and Asn71. Intrachain disulfides connect Cys272/Cys282, Cys281/Cys340, Cys309/Cys372, and Cys313/Cys374.

This sequence belongs to the TGF-beta family. Homodimer; disulfide-linked. Interacts with WFIKKN2, leading to inhibit its activity. Interacts with FSTL3. In terms of processing, synthesized as large precursor molecule that undergoes proteolytic cleavage to generate an N-terminal propeptide and a disulfide linked C-terminal dimer, which is the biologically active molecule. The circulating form consists of a latent complex of the C-terminal dimer and other proteins, including its propeptide, which maintain the C-terminal dimer in a latent, inactive state. Ligand activation requires additional cleavage of the prodomain by a tolloid-like metalloproteinase.

It localises to the secreted. In terms of biological role, acts specifically as a negative regulator of skeletal muscle growth. The polypeptide is Growth/differentiation factor 8 (MSTN) (Bos gaurus (Seladang)).